The chain runs to 134 residues: Agouti-related protein (134 aa).

Residues 1-20 (MLTTMLLSCALLLAMPTMLG) form the signal peptide. A propeptide spanning residues 21-84 (AQIGLAPLEG…VLDPEGRKAR (64 aa)) is cleaved from the precursor. 5 disulfide bridges follow: cysteine 89-cysteine 104, cysteine 96-cysteine 110, cysteine 103-cysteine 121, cysteine 107-cysteine 131, and cysteine 112-cysteine 119. One can recognise an Agouti domain in the interval 89–131 (CVRLHESCLGHQVPCCDPCATCYCRFFNAFCYCRKLGTATNPC). The segment at 113–115 (RFF) is interaction with melanocortin receptors.

In terms of assembly, interacts with melanocortin receptors MC3R, MC4R and MC5R.

It localises to the secreted. Its subcellular location is the golgi apparatus lumen. Plays a role in weight homeostasis. Involved in the control of feeding behavior through the central melanocortin system. Acts as alpha melanocyte-stimulating hormone antagonist by inhibiting cAMP production mediated by stimulation of melanocortin receptors within the hypothalamus and adrenal gland. Has very low activity with MC5R. Is an inverse agonist for MC3R and MC4R being able to suppress their constitutive activity. It promotes MC3R and MC4R endocytosis in an arrestin-dependent manner. This is Agouti-related protein (AGRP) from Sus scrofa (Pig).